Reading from the N-terminus, the 208-residue chain is uncharacterized protein (208 aa).

4Fe-4S ferredoxin-type domains follow at residues 59-88 (GVLV…SVGT), 114-145 (GDLN…WQQK), 147-176 (GCIT…VNTE), and 174-203 (NTES…IIEW). [4Fe-4S] cluster is bound by residues Cys-68, Cys-71, Cys-74, Cys-78, Cys-123, Cys-126, Cys-131, Cys-135, Cys-156, Cys-159, Cys-162, Cys-166, Cys-183, Cys-186, Cys-189, and Cys-193.

This is an uncharacterized protein from Escherichia coli O157:H7.